The following is a 145-amino-acid chain: Oocyte zinc finger protein XlCOF8.4I (145 aa).

The tract at residues 1–25 is disordered; sequence HKREADFCSKGNLTNPEISPVEHYP. A C2H2-type zinc finger spans residues 123–145; sequence LSCSECGKCFSTYHVLARHQKTH.

The protein belongs to the krueppel C2H2-type zinc-finger protein family.

The protein resides in the nucleus. In terms of biological role, may be involved in transcriptional regulation. The protein is Oocyte zinc finger protein XlCOF8.4I of Xenopus laevis (African clawed frog).